A 395-amino-acid chain; its full sequence is Formate-dependent phosphoribosylglycinamide formyltransferase (395 aa).

Residues 22–23 (EL) and glutamate 82 contribute to the N(1)-(5-phospho-beta-D-ribosyl)glycinamide site. Residues arginine 115, lysine 156, 161–166 (SSGKGQ), 196–199 (EGFI), and glutamate 204 each bind ATP. The ATP-grasp domain occupies 120–309 (RLAAETLGLP…EFALHARAIL (190 aa)). The Mg(2+) site is built by glutamate 268 and glutamate 280. N(1)-(5-phospho-beta-D-ribosyl)glycinamide contacts are provided by residues aspartate 287, lysine 356, and 363–364 (RR).

This sequence belongs to the PurK/PurT family. In terms of assembly, homodimer.

It carries out the reaction N(1)-(5-phospho-beta-D-ribosyl)glycinamide + formate + ATP = N(2)-formyl-N(1)-(5-phospho-beta-D-ribosyl)glycinamide + ADP + phosphate + H(+). The protein operates within purine metabolism; IMP biosynthesis via de novo pathway; N(2)-formyl-N(1)-(5-phospho-D-ribosyl)glycinamide from N(1)-(5-phospho-D-ribosyl)glycinamide (formate route): step 1/1. Involved in the de novo purine biosynthesis. Catalyzes the transfer of formate to 5-phospho-ribosyl-glycinamide (GAR), producing 5-phospho-ribosyl-N-formylglycinamide (FGAR). Formate is provided by PurU via hydrolysis of 10-formyl-tetrahydrofolate. The polypeptide is Formate-dependent phosphoribosylglycinamide formyltransferase (Stenotrophomonas maltophilia (strain R551-3)).